The sequence spans 300 residues: Ribonuclease Z (300 aa).

7 residues coordinate Zn(2+): H63, H65, D67, H68, H140, D207, and H265. The active-site Proton acceptor is D67.

It belongs to the RNase Z family. As to quaternary structure, homodimer. Requires Zn(2+) as cofactor.

It catalyses the reaction Endonucleolytic cleavage of RNA, removing extra 3' nucleotides from tRNA precursor, generating 3' termini of tRNAs. A 3'-hydroxy group is left at the tRNA terminus and a 5'-phosphoryl group is left at the trailer molecule.. In terms of biological role, zinc phosphodiesterase, which displays some tRNA 3'-processing endonuclease activity. Probably involved in tRNA maturation, by removing a 3'-trailer from precursor tRNA. This chain is Ribonuclease Z, found in Ignicoccus hospitalis (strain KIN4/I / DSM 18386 / JCM 14125).